Reading from the N-terminus, the 156-residue chain is MGKEIEKKFIVSGDAYKSLAKGVLYRQGYIFFDKDKSVRVRVFNDKGYLTVKGTSTGISRLEYEYEIPVGEANEILEYLCEKPVIEKLRYKFQFEGFTWEVDEFLGENEGLVIAEIELPDENAVFKKPDWIGREVTGDPRYLNSNLVKNPYKNFKE.

Positions 2–148 (GKEIEKKFIV…PRYLNSNLVK (147 aa)) constitute a CYTH domain. Residue Y29 is the Proton acceptor of the active site.

In terms of assembly, homodimer.

The catalysed reaction is triphosphate + H2O = phosphate + diphosphate. The enzyme catalyses ATP + H2O = ADP + phosphate + H(+). Its function is as follows. Involved in the hydrolysis of the beta-gamma-phosphoanhydride linkage of triphosphate-containing substrates (inorganic or nucleoside-linked). Catalyzes vigorously the hydrolysis of inorganic triphosphate (PPPi), however it can also catalyze the hydrolysis of ATP to ADP and phosphate. It can use ribonucleotides such as GTP, CTP, or UTP and deoxynucleotides such as dATP, dGTP, dCTP, and dTTP. This Acetivibrio thermocellus (strain ATCC 27405 / DSM 1237 / JCM 9322 / NBRC 103400 / NCIMB 10682 / NRRL B-4536 / VPI 7372) (Clostridium thermocellum) protein is Inorganic triphosphatase.